The following is a 277-amino-acid chain: Phosphonates import ATP-binding protein PhnC 2 (277 aa).

One can recognise an ABC transporter domain in the interval 3–251; that stretch reads ISLNGISVQH…LLQALYAQHL (249 aa). An ATP-binding site is contributed by 40 to 47; that stretch reads GPSGAGKT.

Belongs to the ABC transporter superfamily. Phosphonates importer (TC 3.A.1.9.1) family. The complex is composed of two ATP-binding proteins (PhnC), two transmembrane proteins (PhnE) and a solute-binding protein (PhnD).

It localises to the cell inner membrane. The catalysed reaction is phosphonate(out) + ATP + H2O = phosphonate(in) + ADP + phosphate + H(+). Functionally, part of the ABC transporter complex PhnCDE involved in phosphonates import. Responsible for energy coupling to the transport system. This chain is Phosphonates import ATP-binding protein PhnC 2, found in Albidiferax ferrireducens (strain ATCC BAA-621 / DSM 15236 / T118) (Rhodoferax ferrireducens).